The chain runs to 84 residues: uncharacterized protein (84 aa).

Residues 34 to 54 show a composition bias toward low complexity; that stretch reads ATSTASSSAAKNTTSSSKNAA. Residues 34–57 form a disordered region; it reads ATSTASSSAAKNTTSSSKNAAPGM. An N-linked (GlcNAc...) asparagine glycan is attached at Asn45. The helical transmembrane segment at 66 to 83 threads the bilayer; sequence YGIIMAAFAAVSFVLGTG.

It is found in the endoplasmic reticulum membrane. This is an uncharacterized protein from Saccharomyces cerevisiae (strain ATCC 204508 / S288c) (Baker's yeast).